The primary structure comprises 500 residues: Cytochrome P450 71B37 (500 aa).

The helical transmembrane segment at 2-22 threads the bilayer; it reads ATIWFLPLLFLSCLLLAALRL. Cys-440 contributes to the heme binding site.

This sequence belongs to the cytochrome P450 family. It depends on heme as a cofactor.

It is found in the membrane. This Arabidopsis thaliana (Mouse-ear cress) protein is Cytochrome P450 71B37 (CYP71B37).